A 244-amino-acid chain; its full sequence is 5'-deoxynucleotidase (244 aa).

The enzyme catalyses a 2'-deoxyribonucleoside 5'-phosphate + H2O = a 2'-deoxyribonucleoside + phosphate. Following host DNA degradation, is responsible for the degradation of 5'-dNMP's to deoxynucleosides that can be further excreted. Active on deoxynucleoside 5'-monophosphates but not active as a phosphatase on ribonucleotides, deoxynucleoside 5'-triphosphates, deoxynucleoside 3'-monophosphates, or deoxyoligonucleotides. The protein is 5'-deoxynucleotidase (dmp) of Escherichia coli (Enterobacteria phage T5).